The sequence spans 595 residues: P2X purinoceptor 7 (595 aa).

The Cytoplasmic portion of the chain corresponds to 1–22; it reads MPACCSWNDVLQYETNKVTRIQ. The S-palmitoyl cysteine moiety is linked to residue Cys4. Residues 23–46 traverse the membrane as a helical segment; it reads STNYGTVKWVLHMIVFSYISFALV. The Extracellular portion of the chain corresponds to 47 to 328; the sequence is SDKLYQRKEP…ILVFGTGGKF (282 aa). A glycan (N-linked (GlcNAc...) asparagine) is linked at Asn74. Cystine bridges form between Cys119–Cys168, Cys129–Cys152, and Cys135–Cys162. ADP-ribosylarginine; by ART2B occurs at positions 125 and 133. N-linked (GlcNAc...) asparagine glycosylation occurs at Asn187. Residue Thr189 participates in ATP binding. Residues Asn202 and Asn213 are each glycosylated (N-linked (GlcNAc...) asparagine). A disulfide bridge connects residues Cys216 and Cys226. An N-linked (GlcNAc...) asparagine glycan is attached at Asn241. An intrachain disulfide couples Cys260 to Cys269. ATP-binding residues include Arg294 and Lys311. A helical membrane pass occupies residues 329 to 353; sequence DIIQLVVYIGSTLSYFGLATVCIDL. Ser342 contacts Na(+). The Cytoplasmic segment spans residues 354 to 595; the sequence is LINTYSSAFC…GQYSGFKYPY (242 aa). The C-cys anchor stretch occupies residues 360–377; it reads SAFCRSGVYPYCKCCEPC. Residues Cys363, Cys374, and Cys377 are each lipidated (S-palmitoyl cysteine). Ser390 carries the post-translational modification Phosphoserine. The tract at residues 395–595 is cytoplasmic ballast; sequence KPTLKYVSFV…GQYSGFKYPY (201 aa). Zn(2+)-binding residues include Cys479, Cys499, and Cys506. The GTP site is built by Arg546, His547, Tyr550, and Ala567. Cys572 serves as a coordination point for Zn(2+). Residues Lys583, Ser589, and Gly590 each contribute to the GTP site.

This sequence belongs to the P2X receptor family. Homotrimers. Interacts with LAMA3, ITGB2, ACTB, ACTN4, SVIL, MPP3, HSPA1, HSPCB, HSPA8, PIK230 and PTPRB. Interacts (via C-terminus) with EMP2. In terms of processing, phosphorylation results in its inactivation. ADP-ribosylation at Arg-125 is necessary and sufficient to activate P2RX7 and gate the channel. Post-translationally, palmitoylation of several cysteines in the C-terminal cytoplasmic tail is required for efficient localization to cell surface. Palmitoylation prevents channel desensitization by physically anchoring the palmitoylated groups to the membrane.

It localises to the cell membrane. It carries out the reaction Ca(2+)(in) = Ca(2+)(out). The enzyme catalyses K(+)(in) = K(+)(out). It catalyses the reaction Na(+)(in) = Na(+)(out). With respect to regulation, activated by high extracellular ATP levels (0.1-2.5 mM). The synthetic analog 2'(3')-O-(4-benzoylbenzoyl)ATP (BzATP) acts as a potent agonist. Does not undergo desensitization, instead, undergoes a facilitation process where currents progressively increase with repetitive or prolonged agonist application. Palmitoylation prevents channel desensitization. The permeability of the P2RX7 channel is modulated by the amount of cholesterol in the plasma membrane. Functionally, ATP-gated nonselective transmembrane cation channel. Requires high millimolar-range concentrations of ATP to become activated. ATP binding trigers the rapid opening of the channel and allows Na(+) and Ca(2+) influx and K(+) efflux. Has also the ability to form a large pore in the cell membrane, allowing the passage of large cationic molecules. In microglia, may mediate NADPH transport across the plasma membrane. In immune cells, P2RX7 acts as a molecular sensor in pathological inflammatory states by detecting and responding to high local concentrations of extracellar ATP. In microglial cells, P2RX7 activation leads to the release of pro-inflammatory cytokines, such as IL-1beta and IL-18, through the activation of the NLRP3 inflammasome and caspase-1. Cooperates with KCNK6 to activate NLRP3 inflammasome. Activates death pathways leading to apoptosis and autophagy. Activates death pathways leading to pyroptosis. The sequence is that of P2X purinoceptor 7 (P2rx7) from Mus musculus (Mouse).